The chain runs to 663 residues: UvrABC system protein B (663 aa).

The Helicase ATP-binding domain occupies 27–414 (KNIENGVKDQ…SDNHIAEQLI (388 aa)). 40 to 47 (GVTGSGKT) is an ATP binding site. The Beta-hairpin signature appears at 93–116 (YYDYYQPEAYIKTTDTYIEKDSSV). The region spanning 432 to 594 (QVDDLLDEIR…IDPKSIIKEI (163 aa)) is the Helicase C-terminal domain. The 36-residue stretch at 624–659 (EKEITKLEKKIKKLVEELDFEQAIILRDEMLKLKEL) folds into the UVR domain.

The protein belongs to the UvrB family. As to quaternary structure, forms a heterotetramer with UvrA during the search for lesions. Interacts with UvrC in an incision complex.

It is found in the cytoplasm. Its function is as follows. The UvrABC repair system catalyzes the recognition and processing of DNA lesions. A damage recognition complex composed of 2 UvrA and 2 UvrB subunits scans DNA for abnormalities. Upon binding of the UvrA(2)B(2) complex to a putative damaged site, the DNA wraps around one UvrB monomer. DNA wrap is dependent on ATP binding by UvrB and probably causes local melting of the DNA helix, facilitating insertion of UvrB beta-hairpin between the DNA strands. Then UvrB probes one DNA strand for the presence of a lesion. If a lesion is found the UvrA subunits dissociate and the UvrB-DNA preincision complex is formed. This complex is subsequently bound by UvrC and the second UvrB is released. If no lesion is found, the DNA wraps around the other UvrB subunit that will check the other stand for damage. The protein is UvrABC system protein B of Fusobacterium nucleatum subsp. nucleatum (strain ATCC 25586 / DSM 15643 / BCRC 10681 / CIP 101130 / JCM 8532 / KCTC 2640 / LMG 13131 / VPI 4355).